A 380-amino-acid polypeptide reads, in one-letter code: Protein neprosin (380 aa).

A signal peptide spans 1–24 (MQAKFFTFVILSSVFYFNYPLAEA). Positions 25-128 (RSIQARLANK…QFPNLKFAPP (104 aa)) are cleaved as a propeptide — activation peptide. Cys52 and Cys98 are oxidised to a cystine. Residues Asn68, Asn145, and Asn152 are each glycosylated (N-linked (GlcNAc...) asparagine). The Neprosin PEP catalytic domain maps to 129 to 380 (SANTNHQYAV…YLFYGGPGCQ (252 aa)). The active site involves Glu188. Cys219 and Cys224 are disulfide-bonded. Asn253 carries an N-linked (GlcNAc...) asparagine glycan. Glu297 is a catalytic residue. Cys358 and Cys379 are joined by a disulfide.

The protein belongs to the peptidase G3 family.

It is found in the secreted. The catalysed reaction is Hydrolysis of Pro-|-Xaa &gt;&gt; Ala-|-Xaa in oligopeptides.. Weakly inhibited by the aspartic protease inhibitor pepstatin. Weakly inhibited by pepstatin A (IC(50) of 140 uM) and 1,2-epoxy-3-(p-nitrophenoxy)propane (EPNP) (IC(50) of 480 uM). Activity is not affected by the POP inhibitor Z-Pro-prolinal inhibitor or the denaturant urea. Glutamic endopeptidase that preferentially cleaves peptide bonds on the C-terminal side of proline residues. Also cleaves peptide bonds on the C-terminal side of alanine residues but with less efficiency. In contrast to most proline-cleaving enzymes, effectively degrades proteins of any size. Found in the viscoelastic fluid of the pitcher, and so likely functions in the digestion of their prey. This Nepenthes x ventrata (Red tropical pitcher plant) protein is Protein neprosin.